A 492-amino-acid polypeptide reads, in one-letter code: Probable cobyric acid synthase (492 aa).

Residues Pro-252–Phe-444 enclose the GATase cobBQ-type domain. The active-site Nucleophile is Cys-330. Residue His-436 is part of the active site.

Belongs to the CobB/CobQ family. CobQ subfamily.

Its pathway is cofactor biosynthesis; adenosylcobalamin biosynthesis. In terms of biological role, catalyzes amidations at positions B, D, E, and G on adenosylcobyrinic A,C-diamide. NH(2) groups are provided by glutamine, and one molecule of ATP is hydrogenolyzed for each amidation. The sequence is that of Probable cobyric acid synthase from Methanococcus maripaludis (strain C6 / ATCC BAA-1332).